The following is a 363-amino-acid chain: AA9 family lytic polysaccharide monooxygenase I (363 aa).

Residues 1–19 form the signal peptide; it reads MSLFKFAAFVLGTAGSVAG. Residues histidine 20 and histidine 105 each coordinate Cu(2+). 2 disulfides stabilise this stretch: cysteine 75/cysteine 197 and cysteine 116/cysteine 120. The O2 site is built by histidine 183 and glutamine 192. Residue tyrosine 194 participates in Cu(2+) binding. Residues 248-257 are compositionally biased toward polar residues; sequence GSDSNTATSG. Disordered stretches follow at residues 248–270 and 298–363; these read GSDS…PTTT and SVSY…RTQS. Low complexity predominate over residues 258-270; the sequence is ASPPSTNFSPTTT. The span at 298–307 shows a compositional bias: polar residues; the sequence is SVSYSQTPWP. The span at 308 to 329 shows a compositional bias: low complexity; the sequence is SSTATEATSASSSAGGSNNGHT. The segment covering 342 to 354 has biased composition (basic residues); that stretch reads TGKKRSRLNRRRM.

Belongs to the polysaccharide monooxygenase AA9 family. Requires Cu(2+) as cofactor.

It localises to the secreted. The enzyme catalyses [(1-&gt;4)-beta-D-glucosyl]n+m + reduced acceptor + O2 = 4-dehydro-beta-D-glucosyl-[(1-&gt;4)-beta-D-glucosyl]n-1 + [(1-&gt;4)-beta-D-glucosyl]m + acceptor + H2O.. Functionally, lytic polysaccharide monooxygenase (LPMO) that depolymerizes crystalline and amorphous polysaccharides via the oxidation of scissile alpha- or beta-(1-4)-glycosidic bonds, yielding C1 or C4 oxidation products. Catalysis by LPMOs requires the reduction of the active-site copper from Cu(II) to Cu(I) by a reducing agent and H(2)O(2) or O(2) as a cosubstrate. The protein is AA9 family lytic polysaccharide monooxygenase I of Emericella nidulans (strain FGSC A4 / ATCC 38163 / CBS 112.46 / NRRL 194 / M139) (Aspergillus nidulans).